The chain runs to 210 residues: Glutathione S-transferase P 1 (210 aa).

The 80-residue stretch at 1 to 80 (PEYTIIYFNA…LLARNHDLYG (80 aa)) folds into the GST N-terminal domain. Residues Y7, R13, W38, K44, 51–52 (QL), and 64–65 (QS) each bind glutathione. The GST C-terminal domain maps to 82 to 203 (NPREASLIDM…SSDAHKKRPI (122 aa)).

The protein belongs to the GST superfamily. Pi family. In terms of assembly, homodimer.

The protein resides in the cytoplasm. Its subcellular location is the mitochondrion. It localises to the nucleus. The catalysed reaction is RX + glutathione = an S-substituted glutathione + a halide anion + H(+). In terms of biological role, conjugation of reduced glutathione to a wide number of exogenous and endogenous hydrophobic electrophiles. The chain is Glutathione S-transferase P 1 from Bufo bufo (European toad).